The following is a 277-amino-acid chain: Diaminopimelate epimerase (277 aa).

The substrate site is built by asparagine 15, glutamine 48, and asparagine 66. Cysteine 75 (proton donor) is an active-site residue. Substrate contacts are provided by residues 76 to 77 (GN), asparagine 156, asparagine 189, and 207 to 208 (ER). Residue cysteine 216 is the Proton acceptor of the active site. 217–218 (GS) contacts substrate.

This sequence belongs to the diaminopimelate epimerase family. In terms of assembly, homodimer.

The protein resides in the cytoplasm. The catalysed reaction is (2S,6S)-2,6-diaminopimelate = meso-2,6-diaminopimelate. The protein operates within amino-acid biosynthesis; L-lysine biosynthesis via DAP pathway; DL-2,6-diaminopimelate from LL-2,6-diaminopimelate: step 1/1. Its function is as follows. Catalyzes the stereoinversion of LL-2,6-diaminopimelate (L,L-DAP) to meso-diaminopimelate (meso-DAP), a precursor of L-lysine and an essential component of the bacterial peptidoglycan. The polypeptide is Diaminopimelate epimerase (Acidiphilium cryptum (strain JF-5)).